A 157-amino-acid chain; its full sequence is Type II restriction enzyme PvuII (157 aa).

Residues D58 and E68 each contribute to the Mg(2+) site.

As to quaternary structure, homodimer. Mg(2+) serves as cofactor.

The enzyme catalyses Endonucleolytic cleavage of DNA to give specific double-stranded fragments with terminal 5'-phosphates.. A P subtype restriction enzyme that recognizes the double-stranded sequence 5'-CAGCTG-3' and cleaves after G-3. The protein is Type II restriction enzyme PvuII (pvuIIR) of Proteus hauseri.